The following is a 250-amino-acid chain: 3-deoxy-manno-octulosonate cytidylyltransferase (250 aa).

It belongs to the KdsB family.

The protein localises to the cytoplasm. It carries out the reaction 3-deoxy-alpha-D-manno-oct-2-ulosonate + CTP = CMP-3-deoxy-beta-D-manno-octulosonate + diphosphate. It participates in nucleotide-sugar biosynthesis; CMP-3-deoxy-D-manno-octulosonate biosynthesis; CMP-3-deoxy-D-manno-octulosonate from 3-deoxy-D-manno-octulosonate and CTP: step 1/1. The protein operates within bacterial outer membrane biogenesis; lipopolysaccharide biosynthesis. Functionally, activates KDO (a required 8-carbon sugar) for incorporation into bacterial lipopolysaccharide in Gram-negative bacteria. The chain is 3-deoxy-manno-octulosonate cytidylyltransferase from Legionella pneumophila (strain Lens).